The primary structure comprises 206 residues: GTP cyclohydrolase 1 (206 aa).

3 residues coordinate Zn(2+): Cys98, His101, and Cys169.

This sequence belongs to the GTP cyclohydrolase I family. As to quaternary structure, toroid-shaped homodecamer, composed of two pentamers of five dimers.

It catalyses the reaction GTP + H2O = 7,8-dihydroneopterin 3'-triphosphate + formate + H(+). The protein operates within cofactor biosynthesis; 7,8-dihydroneopterin triphosphate biosynthesis; 7,8-dihydroneopterin triphosphate from GTP: step 1/1. In Helicobacter hepaticus (strain ATCC 51449 / 3B1), this protein is GTP cyclohydrolase 1.